The primary structure comprises 61 residues: Metallothionein-I, hippocampal (61 aa).

An N-acetylmethionine modification is found at methionine 1. The interval methionine 1–cysteine 29 is beta. Positions 5, 7, 13, 15, 19, 21, 24, 26, 29, 33, 34, 36, 37, 41, 44, 48, 50, and 57 each coordinate a divalent metal cation. An alpha region spans residues lysine 30 to alanine 61. Serine 58 is subject to Phosphoserine. A divalent metal cation-binding residues include cysteine 59 and cysteine 60.

Belongs to the metallothionein superfamily. Type 1 family.

Its function is as follows. Metallothioneins have a high content of cysteine residues that bind various heavy metals; these proteins are transcriptionally regulated by both heavy metals and glucocorticoids. This isoform may play a role in regulating the transport, accumulation, and compartmentation of zinc in the hippocampus. This chain is Metallothionein-I, hippocampal, found in Bos taurus (Bovine).